Reading from the N-terminus, the 300-residue chain is MTTTLTPPSSRREDGDGSVQVHQDASLKIEEGALVIAVYGKGGIGKSTTSSNLSAAFSKLGKRVLQIGCDPKHDSTFTLTHKMVPTVIDILEEVDFHSEELQPEDFVFEGFNGVMCVESGGPPAGTGCGGYVTGQTVKLLKEHHLLEDTDVVIFDVLGDVVCGGFAAPLQHANYCLIVTANDFDSIFAMNRIVQAIQAKAKNYKVRLGGVVANRSAETDQIDKFNERTGLRTMAHFRDVDAIRRSRLKKCTIFEMDKDEEGVEAVQNEYLLLAQNMLDHVEPLEAESLKDREIFDLLGFD.

ATP contacts are provided by residues 43–48 (GIGKST) and Lys72. Ser47 provides a ligand contact to Mg(2+). Residues Cys128 and Cys162 each coordinate [4Fe-4S] cluster. Position 213–214 (213–214 (NR)) interacts with ATP.

It belongs to the NifH/BchL/ChlL family. As to quaternary structure, homodimer. Protochlorophyllide reductase is composed of three subunits; ChlL, ChlN and ChlB. The cofactor is [4Fe-4S] cluster.

It carries out the reaction chlorophyllide a + oxidized 2[4Fe-4S]-[ferredoxin] + 2 ADP + 2 phosphate = protochlorophyllide a + reduced 2[4Fe-4S]-[ferredoxin] + 2 ATP + 2 H2O. It functions in the pathway porphyrin-containing compound metabolism; chlorophyll biosynthesis (light-independent). Its function is as follows. Component of the dark-operative protochlorophyllide reductase (DPOR) that uses Mg-ATP and reduced ferredoxin to reduce ring D of protochlorophyllide (Pchlide) to form chlorophyllide a (Chlide). This reaction is light-independent. The L component serves as a unique electron donor to the NB-component of the complex, and binds Mg-ATP. The sequence is that of Light-independent protochlorophyllide reductase iron-sulfur ATP-binding protein from Synechococcus sp. (strain RCC307).